A 205-amino-acid polypeptide reads, in one-letter code: Small ribosomal subunit protein uS4 (205 aa).

The segment at 18–46 is disordered; sequence NIWGRPKSPVNRREYGPGQHGQRRKGKLS. The region spanning 94–154 is the S4 RNA-binding domain; that stretch reads RRLDAVVYRA…EASKQLAHVL (61 aa).

The protein belongs to the universal ribosomal protein uS4 family. In terms of assembly, part of the 30S ribosomal subunit. Contacts protein S5. The interaction surface between S4 and S5 is involved in control of translational fidelity.

One of the primary rRNA binding proteins, it binds directly to 16S rRNA where it nucleates assembly of the body of the 30S subunit. In terms of biological role, with S5 and S12 plays an important role in translational accuracy. This chain is Small ribosomal subunit protein uS4, found in Bradyrhizobium diazoefficiens (strain JCM 10833 / BCRC 13528 / IAM 13628 / NBRC 14792 / USDA 110).